A 406-amino-acid chain; its full sequence is GTPase Obg (406 aa).

The 159-residue stretch at 1-159 folds into the Obg domain; that stretch reads MKFVDEVSIH…RDLKLELKVL (159 aa). The tract at residues 127-148 is disordered; it reads NTRFKSSTNRAPRQTTPGKPGE. Over residues 129–143 the composition is skewed to polar residues; it reads RFKSSTNRAPRQTTP. The OBG-type G domain occupies 160-334; the sequence is ADVGLLGLPN…LSQDIMRYLD (175 aa). GTP contacts are provided by residues 166–173, 191–195, 213–216, 283–286, and 315–317; these read GLPNAGKS, FTTLV, DIPG, NKMD, and SAL. The Mg(2+) site is built by Ser173 and Thr193. Positions 382-406 are disordered; it reads AGAVDDDDFDDEEDDGDGPEIFYVP. The span at 385 to 399 shows a compositional bias: acidic residues; that stretch reads VDDDDFDDEEDDGDG.

The protein belongs to the TRAFAC class OBG-HflX-like GTPase superfamily. OBG GTPase family. Monomer. Mg(2+) serves as cofactor.

The protein localises to the cytoplasm. Functionally, an essential GTPase which binds GTP, GDP and possibly (p)ppGpp with moderate affinity, with high nucleotide exchange rates and a fairly low GTP hydrolysis rate. Plays a role in control of the cell cycle, stress response, ribosome biogenesis and in those bacteria that undergo differentiation, in morphogenesis control. In Pseudomonas aeruginosa (strain LESB58), this protein is GTPase Obg.